Consider the following 184-residue polypeptide: MTSPYLIVGLGNLGPEYTKTRHNIGYMAIDELLTRTSPMPATLTVHKKTNTLVAETRLGTQKVIVAKPRAFMNVTGPSVRKLADFFTVDRNRIVVLYDDLDLEFGAIKFRHGGGDHGHNGLKSITQALGTKDYIRGGIGIGRPPGRMAPKSFVLKPFSKIEQSELPIVCADAADEVEKITTSEL.

Tyrosine 17 is a tRNA binding site. Catalysis depends on histidine 22, which acts as the Proton acceptor. TRNA is bound by residues phenylalanine 71, asparagine 73, and asparagine 119.

The protein belongs to the PTH family. As to quaternary structure, monomer.

The protein resides in the cytoplasm. The catalysed reaction is an N-acyl-L-alpha-aminoacyl-tRNA + H2O = an N-acyl-L-amino acid + a tRNA + H(+). Its function is as follows. Hydrolyzes ribosome-free peptidyl-tRNAs (with 1 or more amino acids incorporated), which drop off the ribosome during protein synthesis, or as a result of ribosome stalling. Catalyzes the release of premature peptidyl moieties from peptidyl-tRNA molecules trapped in stalled 50S ribosomal subunits, and thus maintains levels of free tRNAs and 50S ribosomes. This chain is Peptidyl-tRNA hydrolase, found in Corynebacterium diphtheriae (strain ATCC 700971 / NCTC 13129 / Biotype gravis).